We begin with the raw amino-acid sequence, 94 residues long: Small ubiquitin-related modifier 3 (94 aa).

Residue lysine 11 forms a Glycyl lysine isopeptide (Lys-Gly) (interchain with G-Cter in SUMO) linkage. Residues 15–92 form the Ubiquitin-like domain; that stretch reads DHINLKVAGQ…IDVFQQQTGG (78 aa). Glycine 92 is covalently cross-linked (Glycyl lysine isopeptide (Gly-Lys) (interchain with K-? in acceptor proteins)). A propeptide spanning residues 93 to 94 is cleaved from the precursor; sequence VC.

Belongs to the ubiquitin family. SUMO subfamily. In terms of assembly, interacts with sae2 and ube2i. Covalently attached to a number of proteins. Polymeric chains can be formed through Lys-11 cross-linking. Post-translationally, cleavage of precursor form by a sentrin-specific protease is necessary for function.

The protein resides in the cytoplasm. The protein localises to the nucleus. It localises to the PML body. Functionally, ubiquitin-like protein which can be covalently attached to target lysines either as a monomer or as a lysine-linked polymer. Does not seem to be involved in protein degradation and may function as an antagonist of ubiquitin in the degradation process. Plays a role in a number of cellular processes such as nuclear transport, DNA replication and repair, mitosis and signal transduction. Covalent attachment to its substrates requires prior activation by the E1 complex sae1-sae2 and linkage to the E2 enzyme ube2i. This is Small ubiquitin-related modifier 3 (sumo3) from Xenopus laevis (African clawed frog).